We begin with the raw amino-acid sequence, 194 residues long: N-acetyltransferase (194 aa).

Residues 9–173 (PQVRPGIAED…GRYWDVRWYE (165 aa)) enclose the N-acetyltransferase domain.

It belongs to the acetyltransferase family. PAT/BAR subfamily.

This is N-acetyltransferase (nat) from Streptomyces griseus.